Reading from the N-terminus, the 242-residue chain is UDP-2,3-diacylglucosamine hydrolase (242 aa).

5 residues coordinate Mn(2+): aspartate 9, histidine 11, aspartate 42, asparagine 79, and histidine 114. A substrate-binding site is contributed by 79 to 80; the sequence is NR. Substrate contacts are provided by aspartate 122, serine 160, asparagine 164, lysine 167, and histidine 195. Histidine 195 and histidine 197 together coordinate Mn(2+).

Belongs to the LpxH family. Mn(2+) is required as a cofactor.

The protein localises to the cell inner membrane. It catalyses the reaction UDP-2-N,3-O-bis[(3R)-3-hydroxytetradecanoyl]-alpha-D-glucosamine + H2O = 2-N,3-O-bis[(3R)-3-hydroxytetradecanoyl]-alpha-D-glucosaminyl 1-phosphate + UMP + 2 H(+). The protein operates within glycolipid biosynthesis; lipid IV(A) biosynthesis; lipid IV(A) from (3R)-3-hydroxytetradecanoyl-[acyl-carrier-protein] and UDP-N-acetyl-alpha-D-glucosamine: step 4/6. Functionally, hydrolyzes the pyrophosphate bond of UDP-2,3-diacylglucosamine to yield 2,3-diacylglucosamine 1-phosphate (lipid X) and UMP by catalyzing the attack of water at the alpha-P atom. Involved in the biosynthesis of lipid A, a phosphorylated glycolipid that anchors the lipopolysaccharide to the outer membrane of the cell. The chain is UDP-2,3-diacylglucosamine hydrolase from Shewanella loihica (strain ATCC BAA-1088 / PV-4).